The chain runs to 636 residues: Chaperone protein DnaK (636 aa).

Residue Thr-203 is modified to Phosphothreonine; by autocatalysis. The tract at residues 602–636 (VYGKQQEGAPAQEEPSAEGKKADDEGTVEGEFREV) is disordered. Basic and acidic residues predominate over residues 618-636 (AEGKKADDEGTVEGEFREV).

This sequence belongs to the heat shock protein 70 family.

Its function is as follows. Acts as a chaperone. This chain is Chaperone protein DnaK, found in Dehalococcoides mccartyi (strain CBDB1).